Consider the following 327-residue polypeptide: Phenylalanine--tRNA ligase alpha subunit (327 aa).

Glu-252 provides a ligand contact to Mg(2+).

This sequence belongs to the class-II aminoacyl-tRNA synthetase family. Phe-tRNA synthetase alpha subunit type 1 subfamily. In terms of assembly, tetramer of two alpha and two beta subunits. It depends on Mg(2+) as a cofactor.

It localises to the cytoplasm. It catalyses the reaction tRNA(Phe) + L-phenylalanine + ATP = L-phenylalanyl-tRNA(Phe) + AMP + diphosphate + H(+). The chain is Phenylalanine--tRNA ligase alpha subunit from Shewanella putrefaciens (strain CN-32 / ATCC BAA-453).